The chain runs to 1194 residues: Multidrug efflux ATP-binding/permease protein BCG_0231 (1194 aa).

Helical transmembrane passes span 20-40 (LLLGFGAALAGTVIAVLVPLV), 56-76 (LAPWAVVLVAAAGATYLLTYV), 130-150 (LLFDVPNVLRHVLTLLLGVAV), 153-173 (WLSVPLALLAVLLVPVIGLIA), 258-278 (FALGGWMAAQGSITVGTFVAF), and 279-299 (WACLTLLARPACDLAGMLTIA). The ABC transmembrane type-1 1 domain maps to 21–301 (LLGFGAALAG…LAGMLTIAQQ (281 aa)). An ABC transporter 1 domain is found at 334 to 568 (LEFQRVSFGY…CPRYRELLSP (235 aa)). Residue 367-374 (GAPGSGKS) participates in ATP binding. The next 6 helical transmembrane spans lie at 628–648 (ALSLLLVAVQTCAGLLPPLLI), 660–680 (VLSALWWAALAGTATVVIRWV), 743–763 (LVVAVISVVTLVGILVALLAI), 765–785 (ARLVLLIFTTMPVLALATWQF), 847–867 (LLALYYPFVALLCSLATTLVL), and 878–898 (VISVGALVTYLLYIELLYTPI). Residues 628-910 (ALSLLLVAVQ…LAQMFDDYQR (283 aa)) form the ABC transmembrane type-1 2 domain. Positions 942-1177 (VVFDAVHYSY…GGHYSRLWAA (236 aa)) constitute an ABC transporter 2 domain. 976–983 (GSTGSGKS) is an ATP binding site.

This sequence belongs to the ABC transporter superfamily. Lipid exporter (TC 3.A.1.106) family.

It is found in the cell inner membrane. Its function is as follows. Overexpression increases resistance to chloramphenicol, ampicillin, streptomycin, tetracyclin and vancomycin. The chain is Multidrug efflux ATP-binding/permease protein BCG_0231 from Mycobacterium bovis (strain BCG / Pasteur 1173P2).